The chain runs to 374 residues: F-box/LRR-repeat protein 8 (374 aa).

The 47-residue stretch at 2–48 folds into the F-box domain; the sequence is AEPGEGLPEEVLALIFRHLSLRDRAAAARVCRAWAAAATCSAVWHDT.

In terms of assembly, directly interacts with SKP1 and CUL1.

Functionally, substrate-recognition component of the SCF (SKP1-CUL1-F-box protein)-type E3 ubiquitin ligase complex. The sequence is that of F-box/LRR-repeat protein 8 (FBXL8) from Homo sapiens (Human).